A 54-amino-acid chain; its full sequence is Ribulose bisphosphate carboxylase large chain (54 aa).

Residues 1 to 2 (MS) constitute a propeptide that is removed on maturation. N-acetylproline is present on proline 3. At lysine 14 the chain carries N6,N6,N6-trimethyllysine.

The protein belongs to the RuBisCO large chain family. Type I subfamily. As to quaternary structure, heterohexadecamer of 8 large chains and 8 small chains.

The protein resides in the plastid. It is found in the chloroplast. It carries out the reaction 2 (2R)-3-phosphoglycerate + 2 H(+) = D-ribulose 1,5-bisphosphate + CO2 + H2O. The enzyme catalyses D-ribulose 1,5-bisphosphate + O2 = 2-phosphoglycolate + (2R)-3-phosphoglycerate + 2 H(+). RuBisCO catalyzes two reactions: the carboxylation of D-ribulose 1,5-bisphosphate, the primary event in carbon dioxide fixation, as well as the oxidative fragmentation of the pentose substrate in the photorespiration process. Both reactions occur simultaneously and in competition at the same active site. The chain is Ribulose bisphosphate carboxylase large chain (rbcL) from Magnolia liliiflora (Mulan magnolia).